The sequence spans 34 residues: uncharacterized protein (34 aa).

This is an uncharacterized protein from Saccharomyces cerevisiae (strain ATCC 204508 / S288c) (Baker's yeast).